The primary structure comprises 585 residues: Arginine--tRNA ligase (585 aa).

The short motif at 131–141 (ANPTGPMHVGH) is the 'HIGH' region element.

It belongs to the class-I aminoacyl-tRNA synthetase family. In terms of assembly, monomer.

The protein resides in the cytoplasm. The enzyme catalyses tRNA(Arg) + L-arginine + ATP = L-arginyl-tRNA(Arg) + AMP + diphosphate. This is Arginine--tRNA ligase from Brucella abortus (strain S19).